The primary structure comprises 334 residues: Ferric enterobactin transport system permease protein FepD (334 aa).

Over 1–9 (MSGSVAVTR) the chain is Periplasmic. The chain crosses the membrane as a helical span at residues 10-30 (AIAVPGLLLLLIIATALSLLI). Over 31–63 (GAKSLPASVVLEAFSGTCQSADCTIVLDARLPR) the chain is Cytoplasmic. A helical membrane pass occupies residues 64-84 (TLAGLLAGGALGLAGALMQTL). Topologically, residues 85–92 (TRNPLADP) are periplasmic. The helical transmembrane segment at 93–113 (GLLGVNAGASFAIVLGAALFG) threads the bilayer. Residues 114–120 (YSSAQEQ) are Cytoplasmic-facing. A helical transmembrane segment spans residues 121–141 (LAMAFAGALVASLIVAFTGSQ). Topologically, residues 142–151 (GGGQLSPVRL) are periplasmic. The chain crosses the membrane as a helical span at residues 152–172 (TLAGVALAAVLEGLTSGIALL). At 173-192 (NPDVYDQLRFWQAGSLDIRN) the chain is on the cytoplasmic side. Residues 193-213 (LHTLKVVLIPVLIAGATALLL) traverse the membrane as a helical segment. Residues 214 to 241 (SRALNSLSLGSDTATALGSRVARTQLIG) lie on the Periplasmic side of the membrane. Residues 242-262 (LLAITVLCGSATAIVGPIAFI) traverse the membrane as a helical segment. The Cytoplasmic segment spans residues 263–279 (GLMMPHMARWLVGADHR). A helical transmembrane segment spans residues 280 to 300 (WSLPVTLLATPALLLFADIIG). Over 301-305 (RVIVP) the chain is Periplasmic. A helical transmembrane segment spans residues 306-326 (GELRVSVVSAFIGAPVLIFLV). At 327–334 (RRKTRGGA) the chain is on the cytoplasmic side.

The protein belongs to the binding-protein-dependent transport system permease family. FecCD subfamily. The complex is composed of two ATP-binding proteins (FepC), two transmembrane proteins (FepD and FepG) and a solute-binding protein (FepB).

Its subcellular location is the cell inner membrane. Part of the ABC transporter complex FepBDGC involved in ferric enterobactin uptake. Responsible for the translocation of the substrate across the membrane. This chain is Ferric enterobactin transport system permease protein FepD (fepD), found in Escherichia coli (strain K12).